Here is a 293-residue protein sequence, read N- to C-terminus: Proteinase T (293 aa).

A propeptide spanning residues 1-12 (EFIEQDAVVTIS) is cleaved from the precursor. The 275-residue stretch at 19–293 (PWGLARISSQ…VLINNGEGSA (275 aa)) folds into the Peptidase S8 domain. Intrachain disulfides connect Cys46–Cys137 and Cys192–Cys262. Active-site charge relay system residues include Asp51, His83, and Ser238.

Belongs to the peptidase S8 family.

Functionally, serine proteinase. The chain is Proteinase T (PROT) from Parengyodontium album (Tritirachium album).